We begin with the raw amino-acid sequence, 252 residues long: 5'-nucleotidase SurE (252 aa).

4 residues coordinate a divalent metal cation: Asp8, Asp9, Ser39, and Asn91.

It belongs to the SurE nucleotidase family. The cofactor is a divalent metal cation.

The protein resides in the cytoplasm. It carries out the reaction a ribonucleoside 5'-phosphate + H2O = a ribonucleoside + phosphate. Functionally, nucleotidase that shows phosphatase activity on nucleoside 5'-monophosphates. The sequence is that of 5'-nucleotidase SurE from Bordetella pertussis (strain Tohama I / ATCC BAA-589 / NCTC 13251).